The sequence spans 1337 residues: Protein cordon-bleu (1337 aa).

Residues 1 to 41 (MDAPRALAAKPPTGRKMKARAPPPPGKPAAQNVHSEQKLPH) form a disordered region. A phosphoserine mark is found at Ser47, Ser50, Ser212, Ser235, Ser272, and Ser294. 2 disordered regions span residues 260-556 (SKAE…NDDE) and 647-768 (IASQ…HHGQ). Over residues 288-317 (CVTTPNSPSLHSRSLTLGPSLSLGNISGVS) the composition is skewed to polar residues. A KKRRAP 1 motif is present at residues 323–328 (KKRRAP). 2 positions are modified to phosphoserine: Ser346 and Ser349. The KKRRAP 2 motif lies at 356-361 (KKRRAP). Over residues 361–374 (PAPPPPQQPPPSPV) the composition is skewed to pro residues. Residue Ser372 is modified to Phosphoserine. Positions 377 to 387 (NRKEDKEENRK) are enriched in basic and acidic residues. Residues 411 to 423 (LVLPPPPPYPPPD) are compositionally biased toward pro residues. Over residues 469–480 (ESEETASEDTTE) the composition is skewed to acidic residues. Residues 484-500 (VMSSPSDAISLDSQQDS) show a composition bias toward polar residues. The residue at position 522 (Thr522) is a Phosphothreonine. The span at 526–541 (GPQKSPSWGKSGSGSS) shows a compositional bias: low complexity. 2 stretches are compositionally biased toward polar residues: residues 647–666 (IASQRSHLSPSQTEHSQPFV) and 687–710 (QPTLANTSENENPVETDPTVTSLV). Phosphoserine is present on Ser649. The segment covering 714-736 (LIDDPKAKDKGKVHGSSHSEKTQ) has biased composition (basic and acidic residues). The residue at position 816 (Ser816) is a Phosphoserine. 2 disordered regions span residues 892 to 923 (TPQQQPASQEYGAHLEEERSRPQSAVSCSVKV) and 967 to 991 (KATTEQCHEEAKLARSPPTRKDDAA). Ser1038 is subject to Phosphoserine. Residues 1070 to 1090 (GFNEKQTTSNQKANSTSNFSQ) are compositionally biased toward polar residues. 4 disordered regions span residues 1070-1094 (GFNEKQTTSNQKANSTSNFSQALDK), 1113-1133 (MNGSARTPGNCEPPHSPKEST), 1145-1168 (KPSSLSTDGQDADDTLPSSIFGPK), and 1192-1221 (AIHSSGGREKLRKTAEQTSEGRPKKPSYVE). Ser1128 is modified (phosphoserine). 2 consecutive WH2 domains span residues 1185–1205 (LHSALMEAIHSSGGREKLRKT) and 1225–1245 (ERSALLAAIRGHSGTLSLRKV). Residues 1197–1214 (GGREKLRKTAEQTSEGRP) are compositionally biased toward basic and acidic residues. The interval 1262-1310 (GAPGLDKPQQEDLGLPPPPALPPPPAPAPQAPSASVTVSRFSTGTPSNS) is disordered. The segment covering 1276-1291 (LPPPPALPPPPAPAPQ) has biased composition (pro residues). Residues 1297–1310 (VTVSRFSTGTPSNS) show a composition bias toward polar residues. The residue at position 1303 (Ser1303) is a Phosphoserine. A WH2 3 domain is found at 1313-1333 (ARQALMDAIRSGTGAARLRKV).

In terms of assembly, identified in a complex composed of COBL, PACSIN1 and WASL. Interacts with PACSIN1, PACSIN2 and PACSIN3. Identified in a complex composed of ACTA1, COBL, GSN and TMSB4X. Interacts (via WH2 domains) with actin monomers. Interacts with DBNL. As to expression, detected in brain cortex and in the Purkinje cell layer in the cerebellum. Detected in hippocampus neurons, and at lower levels in testis, lung and spleen (at protein level). Detected in embryonic neural tube.

It localises to the cell membrane. Its subcellular location is the cytoplasm. The protein localises to the cytoskeleton. The protein resides in the cell projection. It is found in the ruffle. Its function is as follows. Plays an important role in the reorganization of the actin cytoskeleton. Binds to and sequesters actin monomers (G actin). Nucleates actin polymerization by assembling three actin monomers in cross-filament orientation and thereby promotes growth of actin filaments at the barbed end. Can also mediate actin depolymerization at barbed ends and severing of actin filaments. Promotes formation of cell ruffles. Regulates neuron morphogenesis and increases branching of axons and dendrites. Regulates dendrite branching in Purkinje cells. In Mus musculus (Mouse), this protein is Protein cordon-bleu (Cobl).